Reading from the N-terminus, the 246-residue chain is DNA-directed RNA polymerase subunit alpha (246 aa).

Belongs to the RNA polymerase alpha chain family. In plastids the minimal PEP RNA polymerase catalytic core is composed of four subunits: alpha, beta, beta', and beta''. When a (nuclear-encoded) sigma factor is associated with the core the holoenzyme is formed, which can initiate transcription (Potential).

Its subcellular location is the plastid. The enzyme catalyses RNA(n) + a ribonucleoside 5'-triphosphate = RNA(n+1) + diphosphate. Functionally, DNA-dependent RNA polymerase catalyzes the transcription of DNA into RNA using the four ribonucleoside triphosphates as substrates. This chain is DNA-directed RNA polymerase subunit alpha (rpoA), found in Helicosporidium sp. subsp. Simulium jonesii (Green alga).